Reading from the N-terminus, the 162-residue chain is 3-hydroxyacyl-[acyl-carrier-protein] dehydratase FabZ (162 aa).

The active site involves His49.

This sequence belongs to the thioester dehydratase family. FabZ subfamily.

It is found in the cytoplasm. The catalysed reaction is a (3R)-hydroxyacyl-[ACP] = a (2E)-enoyl-[ACP] + H2O. Functionally, involved in unsaturated fatty acids biosynthesis. Catalyzes the dehydration of short chain beta-hydroxyacyl-ACPs and long chain saturated and unsaturated beta-hydroxyacyl-ACPs. This chain is 3-hydroxyacyl-[acyl-carrier-protein] dehydratase FabZ, found in Solibacter usitatus (strain Ellin6076).